The following is a 394-amino-acid chain: Formate-dependent phosphoribosylglycinamide formyltransferase (394 aa).

Residues 21 to 22 and Glu-81 contribute to the N(1)-(5-phospho-beta-D-ribosyl)glycinamide site; that span reads EL. ATP is bound by residues Arg-113, Lys-154, 159-164, 194-197, and Glu-202; these read SSGKGQ and EEFI. Positions 118-307 constitute an ATP-grasp domain; the sequence is RLAAEELGLP…QFELHVRAIL (190 aa). The Mg(2+) site is built by Glu-266 and Glu-278. N(1)-(5-phospho-beta-D-ribosyl)glycinamide-binding positions include Asp-285, Lys-355, and 362–363; that span reads RR.

This sequence belongs to the PurK/PurT family. As to quaternary structure, homodimer.

The catalysed reaction is N(1)-(5-phospho-beta-D-ribosyl)glycinamide + formate + ATP = N(2)-formyl-N(1)-(5-phospho-beta-D-ribosyl)glycinamide + ADP + phosphate + H(+). It participates in purine metabolism; IMP biosynthesis via de novo pathway; N(2)-formyl-N(1)-(5-phospho-D-ribosyl)glycinamide from N(1)-(5-phospho-D-ribosyl)glycinamide (formate route): step 1/1. Its function is as follows. Involved in the de novo purine biosynthesis. Catalyzes the transfer of formate to 5-phospho-ribosyl-glycinamide (GAR), producing 5-phospho-ribosyl-N-formylglycinamide (FGAR). Formate is provided by PurU via hydrolysis of 10-formyl-tetrahydrofolate. The sequence is that of Formate-dependent phosphoribosylglycinamide formyltransferase from Pelobacter propionicus (strain DSM 2379 / NBRC 103807 / OttBd1).